The chain runs to 355 residues: S-adenosylmethionine:tRNA ribosyltransferase-isomerase (355 aa).

This sequence belongs to the QueA family. In terms of assembly, monomer.

The protein resides in the cytoplasm. It carries out the reaction 7-aminomethyl-7-carbaguanosine(34) in tRNA + S-adenosyl-L-methionine = epoxyqueuosine(34) in tRNA + adenine + L-methionine + 2 H(+). The protein operates within tRNA modification; tRNA-queuosine biosynthesis. Functionally, transfers and isomerizes the ribose moiety from AdoMet to the 7-aminomethyl group of 7-deazaguanine (preQ1-tRNA) to give epoxyqueuosine (oQ-tRNA). The sequence is that of S-adenosylmethionine:tRNA ribosyltransferase-isomerase from Burkholderia orbicola (strain MC0-3).